The sequence spans 436 residues: Enolase (436 aa).

Gln-163 provides a ligand contact to (2R)-2-phosphoglycerate. Glu-205 (proton donor) is an active-site residue. Positions 242, 285, and 312 each coordinate Mg(2+). (2R)-2-phosphoglycerate contacts are provided by Lys-337, Arg-366, Ser-367, and Lys-388. Lys-337 serves as the catalytic Proton acceptor.

It belongs to the enolase family. Mg(2+) serves as cofactor.

It is found in the cytoplasm. It localises to the secreted. Its subcellular location is the cell surface. It catalyses the reaction (2R)-2-phosphoglycerate = phosphoenolpyruvate + H2O. It functions in the pathway carbohydrate degradation; glycolysis; pyruvate from D-glyceraldehyde 3-phosphate: step 4/5. In terms of biological role, catalyzes the reversible conversion of 2-phosphoglycerate (2-PG) into phosphoenolpyruvate (PEP). It is essential for the degradation of carbohydrates via glycolysis. This Solidesulfovibrio magneticus (strain ATCC 700980 / DSM 13731 / RS-1) (Desulfovibrio magneticus) protein is Enolase.